Here is a 691-residue protein sequence, read N- to C-terminus: Elongation factor G (691 aa).

One can recognise a tr-type G domain in the interval 8 to 282; it reads NKTRNIGIMA…AVVEFLPAPV (275 aa). Residues 17-24, 81-85, and 135-138 each bind GTP; these read AHIDAGKT, DTPGH, and NKMD.

The protein belongs to the TRAFAC class translation factor GTPase superfamily. Classic translation factor GTPase family. EF-G/EF-2 subfamily.

The protein localises to the cytoplasm. In terms of biological role, catalyzes the GTP-dependent ribosomal translocation step during translation elongation. During this step, the ribosome changes from the pre-translocational (PRE) to the post-translocational (POST) state as the newly formed A-site-bound peptidyl-tRNA and P-site-bound deacylated tRNA move to the P and E sites, respectively. Catalyzes the coordinated movement of the two tRNA molecules, the mRNA and conformational changes in the ribosome. The polypeptide is Elongation factor G (Heliobacterium modesticaldum (strain ATCC 51547 / Ice1)).